The chain runs to 433 residues: Enolase (433 aa).

A disordered region spans residues 37–59 (RAAVPSGASTGEHEAVELRDGDK). Basic and acidic residues predominate over residues 47 to 59 (GEHEAVELRDGDK). Gln-166 is a binding site for (2R)-2-phosphoglycerate. Glu-208 serves as the catalytic Proton donor. Asp-245, Glu-291, and Asp-318 together coordinate Mg(2+). Positions 343, 372, 373, and 394 each coordinate (2R)-2-phosphoglycerate. Residue Lys-343 is the Proton acceptor of the active site.

This sequence belongs to the enolase family. The cofactor is Mg(2+).

It is found in the cytoplasm. The protein localises to the secreted. Its subcellular location is the cell surface. It catalyses the reaction (2R)-2-phosphoglycerate = phosphoenolpyruvate + H2O. It functions in the pathway carbohydrate degradation; glycolysis; pyruvate from D-glyceraldehyde 3-phosphate: step 4/5. In terms of biological role, catalyzes the reversible conversion of 2-phosphoglycerate (2-PG) into phosphoenolpyruvate (PEP). It is essential for the degradation of carbohydrates via glycolysis. This is Enolase from Leptospira biflexa serovar Patoc (strain Patoc 1 / Ames).